The following is a 1084-amino-acid chain: Myosin heavy chain, skeletal muscle (1084 aa).

3 disordered regions span residues 1–20 (SAET…KTKE), 270–292 (EIEA…SREL), and 298–317 (RLEE…KKRE). Residues 1 to 258 (SAETEKEMAN…SKIEDEQALM (258 aa)) are alpha-helical tailpiece (S2). Residues 259-1084 (TNLQRIEELE…DVHSKVISEE (826 aa)) form a rodlike tail (S2 and LMM domains) region. Residues 273–292 (AERASRAKAEKQRSDLSREL) are compositionally biased toward basic and acidic residues. Residues 455–1084 (QAFTQQIEGL…DVHSKVISEE (630 aa)) are a coiled coil.

As to quaternary structure, muscle myosin is a hexameric protein that consists of 2 heavy chain subunits (MHC), 2 alkali light chain subunits (MLC) and 2 regulatory light chain subunits (MLC-2).

The protein resides in the cytoplasm. It is found in the myofibril. In terms of biological role, muscle contraction. In Oryctolagus cuniculus (Rabbit), this protein is Myosin heavy chain, skeletal muscle.